A 487-amino-acid polypeptide reads, in one-letter code: Homoserine O-acetyltransferase (487 aa).

The 308-residue stretch at 45–352 (NVILVCHPLT…PHGHDGFLLE (308 aa)) folds into the AB hydrolase-1 domain. The Nucleophile role is filled by S150. R219 serves as a coordination point for substrate. Active-site residues include D313 and H346. Substrate is bound at residue D347. CBS domains are found at residues 373–430 (MTNN…FQDL) and 434–487 (MTKD…EVLQ).

Belongs to the AB hydrolase superfamily. MetX family. Homodimer.

The protein localises to the cytoplasm. The catalysed reaction is L-homoserine + acetyl-CoA = O-acetyl-L-homoserine + CoA. It participates in amino-acid biosynthesis; L-methionine biosynthesis via de novo pathway; O-acetyl-L-homoserine from L-homoserine: step 1/1. In terms of biological role, transfers an acetyl group from acetyl-CoA to L-homoserine, forming acetyl-L-homoserine. In Methanocorpusculum labreanum (strain ATCC 43576 / DSM 4855 / Z), this protein is Homoserine O-acetyltransferase.